An 81-amino-acid polypeptide reads, in one-letter code: ATP synthase subunit c, chloroplastic (81 aa).

2 helical membrane-spanning segments follow: residues 3–23 and 57–77; these read PIIS…ASIG and LAFM…LLFA.

The protein belongs to the ATPase C chain family. As to quaternary structure, F-type ATPases have 2 components, F(1) - the catalytic core - and F(0) - the membrane proton channel. F(1) has five subunits: alpha(3), beta(3), gamma(1), delta(1), epsilon(1). F(0) has four main subunits: a(1), b(1), b'(1) and c(10-14). The alpha and beta chains form an alternating ring which encloses part of the gamma chain. F(1) is attached to F(0) by a central stalk formed by the gamma and epsilon chains, while a peripheral stalk is formed by the delta, b and b' chains.

The protein localises to the plastid. It localises to the chloroplast thylakoid membrane. Functionally, f(1)F(0) ATP synthase produces ATP from ADP in the presence of a proton or sodium gradient. F-type ATPases consist of two structural domains, F(1) containing the extramembraneous catalytic core and F(0) containing the membrane proton channel, linked together by a central stalk and a peripheral stalk. During catalysis, ATP synthesis in the catalytic domain of F(1) is coupled via a rotary mechanism of the central stalk subunits to proton translocation. In terms of biological role, key component of the F(0) channel; it plays a direct role in translocation across the membrane. A homomeric c-ring of between 10-14 subunits forms the central stalk rotor element with the F(1) delta and epsilon subunits. The protein is ATP synthase subunit c, chloroplastic of Cicer arietinum (Chickpea).